The sequence spans 583 residues: Tetratricopeptide repeat protein 39C (583 aa).

Residues 1–22 form a disordered region; the sequence is MAGSEQQRPRRRDDGDSDAAAA. TPR repeat units follow at residues 315–348, 353–386, and 485–518; these read SLFM…AVDQ, HVCL…SRWS, and GLKY…ELCR.

Belongs to the TTC39 family.

This chain is Tetratricopeptide repeat protein 39C (TTC39C), found in Homo sapiens (Human).